The primary structure comprises 123 residues: Transmembrane protein 049L (123 aa).

The next 2 membrane-spanning stretches (helical) occupy residues 67–87 (VFGA…LWLV) and 104–121 (LSLQ…GVYN).

It is found in the membrane. The chain is Transmembrane protein 049L from Acheta domesticus (House cricket).